The chain runs to 288 residues: Heme oxygenase 1 (288 aa).

The Cytoplasmic segment spans residues 1 to 265; that stretch reads MERPQPDSMP…KTPLNTHSQA (265 aa). 4 residues coordinate heme b: Lys18, His25, Tyr134, and Arg183. The segment at 223 to 260 is disordered; sequence HDTKDQSPSRAPGLRQRASNKAQDSAPVETPRGKTPLN. Ser229 carries the post-translational modification Phosphoserine. A helical; Anchor for type IV membrane protein transmembrane segment spans residues 266 to 288; that stretch reads PLLRWVLTLSFLVATVAVGLYAM.

Belongs to the heme oxygenase family. In terms of assembly, homodimer and higher order homooligomer. Oligomerization is crucial for its stability and function in the endoplasmic reticulum. Interacts with FLVCR2; this interaction is potentiated in the presence of heme. Post-translationally, a soluble form arises by proteolytic removal of the membrane anchor.

Its subcellular location is the endoplasmic reticulum membrane. It carries out the reaction heme b + 3 reduced [NADPH--hemoprotein reductase] + 3 O2 = biliverdin IXalpha + CO + Fe(2+) + 3 oxidized [NADPH--hemoprotein reductase] + 3 H2O + H(+). Its function is as follows. Catalyzes the oxidative cleavage of heme at the alpha-methene bridge carbon, released as carbon monoxide (CO), to generate biliverdin IXalpha, while releasing the central heme iron chelate as ferrous iron. Affords protection against programmed cell death and this cytoprotective effect relies on its ability to catabolize free heme and prevent it from sensitizing cells to undergo apoptosis. Catalyzes the oxidative cleavage of heme at the alpha-methene bridge carbon, released as carbon monoxide (CO), to generate biliverdin IXalpha, while releasing the central heme iron chelate as ferrous iron. The sequence is that of Heme oxygenase 1 (HMOX1) from Pongo abelii (Sumatran orangutan).